Reading from the N-terminus, the 543-residue chain is Tetrahydroberberine oxidase (543 aa).

An N-terminal signal peptide occupies residues 1-26 (MIPNSSSSSILSLLVLLLFSTSSSWA). The cysteines at positions 37 and 97 are disulfide-linked. 9 N-linked (GlcNAc...) asparagine glycosylation sites follow: N54, N74, N135, N142, N162, N295, N335, N440, and N482. In terms of domain architecture, FAD-binding PCMH-type spans 75 to 250 (STQKPEFIIT…LSWKVKLVPV (176 aa)). Positions 112–175 (HDVEGLSYVS…NTLGFPAGFC (64 aa)) form a cross-link, 6-(S-cysteinyl)-8alpha-(pros-histidyl)-FAD (His-Cys).

It belongs to the oxygen-dependent FAD-linked oxidoreductase family. Requires FAD as cofactor. In terms of processing, the FAD cofactor is bound via a bicovalent 6-S-cysteinyl, 8alpha-N1-histidyl FAD linkage.

It carries out the reaction (S)-canadine + 2 O2 + H(+) = berberine + 2 H2O2. Catalyzes the oxidation of different tetrahydroprotoberberines, such as (S)-canadine, (S)-scoulerine and (S)-tetrahydropalmatine. This Argemone mexicana (Mexican prickly poppy) protein is Tetrahydroberberine oxidase.